The primary structure comprises 589 residues: Muscarinic acetylcholine receptor M3 (589 aa).

The Extracellular portion of the chain corresponds to 1 to 66 (MTLHSNSTTS…DPLGGHTIWQ (66 aa)). N-linked (GlcNAc...) asparagine glycans are attached at residues N6, N15, N41, N48, and N52. Residues 67 to 90 (VVFIAFLTGFLALVTIIGNILVIV) traverse the membrane as a helical segment. The Cytoplasmic portion of the chain corresponds to 91 to 103 (AFKVNKQLKTVNN). The helical transmembrane segment at 104-129 (YFLLSLACADLIIGVISMNLFTTYII) threads the bilayer. Residues 130 to 141 (MNRWALGNLACD) lie on the Extracellular side of the membrane. C140 and C220 are joined by a disulfide. A helical transmembrane segment spans residues 142-163 (LWLSIDYVASNASVMNLLVISF). Over 164 to 183 (DRYFSITRPLTYRAKRTTKR) the chain is Cytoplasmic. Residues 184 to 205 (AGVMIGLAWVISFVLWAPAILF) traverse the membrane as a helical segment. At 206-228 (WQYFVGKRTVPPGECFIQFLSEP) the chain is on the extracellular side. A helical membrane pass occupies residues 229-251 (TITFGTAIAAFYMPVTIMTILYW). Topologically, residues 252–490 (RIYKETEKRT…SLIKEKKAAQ (239 aa)) are cytoplasmic. A Basolateral sorting signal motif is present at residues 274–280 (AEAENFV). The tract at residues 323–356 (AEQMDQDHSSSDSWNNNDAAASLENSASSDEEDI) is disordered. Positions 333–344 (SDSWNNNDAAAS) are enriched in low complexity. S384 bears the Phosphoserine mark. The chain crosses the membrane as a helical span at residues 491–513 (TLSAILLAFIITWTPYNIMVLVN). At 514–525 (TFCDSCIPKTYW) the chain is on the extracellular side. C516 and C519 are disulfide-bonded. A helical membrane pass occupies residues 526–545 (NLGYWLCYINSTVNPVCYAL). At 546 to 589 (CNKTFRTTFKTLLLCQCDKRKRRKQQYQQRQSVIFHKRVPEQAL) the chain is on the cytoplasmic side.

The protein belongs to the G-protein coupled receptor 1 family. Muscarinic acetylcholine receptor subfamily. CHRM3 sub-subfamily. Homodimer; the dimers can form tetramers. Interacts with NALCN. Interacts with TMEM147.

It localises to the cell membrane. The protein localises to the postsynaptic cell membrane. Its subcellular location is the basolateral cell membrane. The protein resides in the endoplasmic reticulum membrane. Functionally, the muscarinic acetylcholine receptor mediates various cellular responses, including inhibition of adenylate cyclase, breakdown of phosphoinositides and modulation of potassium channels through the action of G proteins. Primary transducing effect is Pi turnover. This is Muscarinic acetylcholine receptor M3 (Chrm3) from Rattus norvegicus (Rat).